We begin with the raw amino-acid sequence, 283 residues long: Probable endonuclease 4 (283 aa).

The Zn(2+) site is built by histidine 69, histidine 109, glutamate 144, aspartate 178, histidine 181, histidine 215, aspartate 228, histidine 230, and glutamate 260.

Belongs to the AP endonuclease 2 family. Zn(2+) serves as cofactor.

The enzyme catalyses Endonucleolytic cleavage to 5'-phosphooligonucleotide end-products.. Its function is as follows. Endonuclease IV plays a role in DNA repair. It cleaves phosphodiester bonds at apurinic or apyrimidinic (AP) sites, generating a 3'-hydroxyl group and a 5'-terminal sugar phosphate. This Thermosipho melanesiensis (strain DSM 12029 / CIP 104789 / BI429) protein is Probable endonuclease 4.